We begin with the raw amino-acid sequence, 480 residues long: Probable GH family 25 lysozyme 3 (480 aa).

Positions 1 to 20 (MNKLILSILSVLLIVSIASA) are cleaved as a signal peptide. The region spanning 21–231 (GNGIDISSGT…STTSSSATSS (211 aa)) is the Ch-type lysozyme domain. Catalysis depends on residues D25, D114, and E116. Over residues 219 to 472 (SGSSTTSSSA…SSGSGNYTSG (254 aa)) the composition is skewed to low complexity. A disordered region spans residues 219–480 (SGSSTTSSSA…SGSGNGAFLF (262 aa)). Residues N423, N428, N437, N446, and N468 are each glycosylated (N-linked (GlcNAc...) asparagine).

It belongs to the glycosyl hydrolase 25 family.

It is found in the secreted. The catalysed reaction is Hydrolysis of (1-&gt;4)-beta-linkages between N-acetylmuramic acid and N-acetyl-D-glucosamine residues in a peptidoglycan and between N-acetyl-D-glucosamine residues in chitodextrins.. In Dictyostelium discoideum (Social amoeba), this protein is Probable GH family 25 lysozyme 3.